The primary structure comprises 178 residues: Inner membrane-spanning protein YciB (178 aa).

A run of 5 helical transmembrane segments spans residues 12–32 (LFFA…VAIV), 50–70 (PMQW…LVLH), 74–94 (FIMW…LISD), 120–140 (LTFA…FVAF), and 145–165 (AVWV…FVLA).

Belongs to the YciB family.

It localises to the cell inner membrane. In terms of biological role, plays a role in cell envelope biogenesis, maintenance of cell envelope integrity and membrane homeostasis. The sequence is that of Inner membrane-spanning protein YciB from Laribacter hongkongensis (strain HLHK9).